Reading from the N-terminus, the 931-residue chain is Bifunctional uridylyltransferase/uridylyl-removing enzyme (931 aa).

Positions 1-383 (MDSVTPNSRP…KTGNSWRRVP (383 aa)) are uridylyltransferase. The segment at 384-739 (ESDDFIVDNN…VGFDPARGVT (356 aa)) is uridylyl-removing. The 124-residue stretch at 499-622 (VDEHLIRCIG…VQSVEQMKLL (124 aa)) folds into the HD domain. ACT domains follow at residues 740–822 (ELTI…AVAR) and 851–931 (VIEV…QPAA).

It belongs to the GlnD family. The cofactor is Mg(2+).

It carries out the reaction [protein-PII]-L-tyrosine + UTP = [protein-PII]-uridylyl-L-tyrosine + diphosphate. The catalysed reaction is [protein-PII]-uridylyl-L-tyrosine + H2O = [protein-PII]-L-tyrosine + UMP + H(+). Its activity is regulated as follows. Uridylyltransferase (UTase) activity is inhibited by glutamine, while glutamine activates uridylyl-removing (UR) activity. In terms of biological role, modifies, by uridylylation and deuridylylation, the PII regulatory proteins (GlnB and homologs), in response to the nitrogen status of the cell that GlnD senses through the glutamine level. Under low glutamine levels, catalyzes the conversion of the PII proteins and UTP to PII-UMP and PPi, while under higher glutamine levels, GlnD hydrolyzes PII-UMP to PII and UMP (deuridylylation). Thus, controls uridylylation state and activity of the PII proteins, and plays an important role in the regulation of nitrogen fixation and metabolism. The sequence is that of Bifunctional uridylyltransferase/uridylyl-removing enzyme from Bradyrhizobium sp. (strain BTAi1 / ATCC BAA-1182).